A 171-amino-acid chain; its full sequence is NADH-quinone oxidoreductase subunit B (171 aa).

Residues Cys-39, Cys-40, Cys-105, and Cys-134 each coordinate [4Fe-4S] cluster.

This sequence belongs to the complex I 20 kDa subunit family. In terms of assembly, NDH-1 is composed of 14 different subunits. Subunits NuoB, C, D, E, F, and G constitute the peripheral sector of the complex. [4Fe-4S] cluster is required as a cofactor.

Its subcellular location is the cell inner membrane. The enzyme catalyses a quinone + NADH + 5 H(+)(in) = a quinol + NAD(+) + 4 H(+)(out). Its function is as follows. NDH-1 shuttles electrons from NADH, via FMN and iron-sulfur (Fe-S) centers, to quinones in the respiratory chain. The immediate electron acceptor for the enzyme in this species is believed to be ubiquinone. Couples the redox reaction to proton translocation (for every two electrons transferred, four hydrogen ions are translocated across the cytoplasmic membrane), and thus conserves the redox energy in a proton gradient. The chain is NADH-quinone oxidoreductase subunit B from Aliarcobacter butzleri (strain RM4018) (Arcobacter butzleri).